Here is a 156-residue protein sequence, read N- to C-terminus: Regulatory protein RecX (156 aa).

This sequence belongs to the RecX family.

Its subcellular location is the cytoplasm. Modulates RecA activity. This chain is Regulatory protein RecX, found in Pseudomonas putida (strain GB-1).